Consider the following 173-residue polypeptide: Crossover junction endodeoxyribonuclease RuvC (173 aa).

Residues D8, E67, and D139 contribute to the active site. D8, E67, and D139 together coordinate Mg(2+).

It belongs to the RuvC family. As to quaternary structure, homodimer which binds Holliday junction (HJ) DNA. The HJ becomes 2-fold symmetrical on binding to RuvC with unstacked arms; it has a different conformation from HJ DNA in complex with RuvA. In the full resolvosome a probable DNA-RuvA(4)-RuvB(12)-RuvC(2) complex forms which resolves the HJ. Mg(2+) serves as cofactor.

Its subcellular location is the cytoplasm. The enzyme catalyses Endonucleolytic cleavage at a junction such as a reciprocal single-stranded crossover between two homologous DNA duplexes (Holliday junction).. Functionally, the RuvA-RuvB-RuvC complex processes Holliday junction (HJ) DNA during genetic recombination and DNA repair. Endonuclease that resolves HJ intermediates. Cleaves cruciform DNA by making single-stranded nicks across the HJ at symmetrical positions within the homologous arms, yielding a 5'-phosphate and a 3'-hydroxyl group; requires a central core of homology in the junction. The consensus cleavage sequence is 5'-(A/T)TT(C/G)-3'. Cleavage occurs on the 3'-side of the TT dinucleotide at the point of strand exchange. HJ branch migration catalyzed by RuvA-RuvB allows RuvC to scan DNA until it finds its consensus sequence, where it cleaves and resolves the cruciform DNA. This chain is Crossover junction endodeoxyribonuclease RuvC, found in Enterobacter sp. (strain 638).